A 404-amino-acid polypeptide reads, in one-letter code: BRCA1-A complex subunit Abraxas 1 (404 aa).

Residues 7–161 enclose the MPN domain; that stretch reads YIRVSGFVLG…YAVYRSHGSQ (155 aa). Residues 219-268 adopt a coiled-coil conformation; sequence MNNSLQGELKMACKKVEESERLVEKLLADVSDLRRMVNERKQELREISAD. The segment at 339 to 404 is disordered; that stretch reads GRLGRGGGTS…NLDVSNSPVF (66 aa). Polar residues predominate over residues 391–404; sequence RNGNNLDVSNSPVF. At Ser-401 the chain carries Phosphoserine. The short motif at 401–404 is the pSXXF motif element; the sequence is SPVF.

The protein belongs to the FAM175 family. Abraxas subfamily. As to quaternary structure, component of the BRCA1-A complex. Component of the BRISC complex. Homodimer. Interacts directly (when phosphorylated at Ser-401) with brca1. The phosphorylated homodimer can interact directly with two brca1 chains, giving rise to a heterotetramer. Phosphorylation of Ser-401 of the pSXXF motif by ATM or ATR constitutes a specific recognition motif for the BRCT domain of BRCA1.

The protein localises to the nucleus. Involved in DNA damage response and double-strand break (DSB) repair. Component of the BRCA1-A complex, acting as a central scaffold protein that assembles the various components of the complex and mediates the recruitment of brca1. The BRCA1-A complex specifically recognizes 'Lys-63'-linked ubiquitinated histones H2A and H2AX at DNA lesion sites, leading to target the brca1-bard1 heterodimer to sites of DNA damage at DSBs. This complex also possesses deubiquitinase activity that specifically removes 'Lys-63'-linked ubiquitin on histones H2A and H2AX. This is BRCA1-A complex subunit Abraxas 1 from Salmo salar (Atlantic salmon).